A 458-amino-acid polypeptide reads, in one-letter code: Exodeoxyribonuclease 7 large subunit (458 aa).

The protein belongs to the XseA family. Heterooligomer composed of large and small subunits.

Its subcellular location is the cytoplasm. It catalyses the reaction Exonucleolytic cleavage in either 5'- to 3'- or 3'- to 5'-direction to yield nucleoside 5'-phosphates.. Its function is as follows. Bidirectionally degrades single-stranded DNA into large acid-insoluble oligonucleotides, which are then degraded further into small acid-soluble oligonucleotides. The protein is Exodeoxyribonuclease 7 large subunit of Geobacter sp. (strain M21).